Here is a 282-residue protein sequence, read N- to C-terminus: Undecaprenyl-diphosphatase (282 aa).

8 consecutive transmembrane segments (helical) span residues V7 to I29, F45 to W65, G89 to K109, L115 to I135, L153 to L173, F196 to L216, T229 to M249, and W258 to I278.

This sequence belongs to the UppP family.

It is found in the cell inner membrane. It catalyses the reaction di-trans,octa-cis-undecaprenyl diphosphate + H2O = di-trans,octa-cis-undecaprenyl phosphate + phosphate + H(+). Catalyzes the dephosphorylation of undecaprenyl diphosphate (UPP). Confers resistance to bacitracin. The chain is Undecaprenyl-diphosphatase from Acidiphilium cryptum (strain JF-5).